We begin with the raw amino-acid sequence, 210 residues long: Large ribosomal subunit protein uL3 (210 aa).

Residues 121–150 (GGIKRHGFHRGPMAHGSKYHRRPGSLGAKG) form a disordered region.

This sequence belongs to the universal ribosomal protein uL3 family. Part of the 50S ribosomal subunit. Forms a cluster with proteins L14 and L19.

Its function is as follows. One of the primary rRNA binding proteins, it binds directly near the 3'-end of the 23S rRNA, where it nucleates assembly of the 50S subunit. This is Large ribosomal subunit protein uL3 from Pelotomaculum thermopropionicum (strain DSM 13744 / JCM 10971 / SI).